The sequence spans 357 residues: Cobalt-precorrin-5B C(1)-methyltransferase (357 aa).

Belongs to the CbiD family.

It carries out the reaction Co-precorrin-5B + S-adenosyl-L-methionine = Co-precorrin-6A + S-adenosyl-L-homocysteine. Its pathway is cofactor biosynthesis; adenosylcobalamin biosynthesis; cob(II)yrinate a,c-diamide from sirohydrochlorin (anaerobic route): step 6/10. Functionally, catalyzes the methylation of C-1 in cobalt-precorrin-5B to form cobalt-precorrin-6A. The sequence is that of Cobalt-precorrin-5B C(1)-methyltransferase from Paramagnetospirillum magneticum (strain ATCC 700264 / AMB-1) (Magnetospirillum magneticum).